Consider the following 5376-residue polypeptide: Zonadhesin (5376 aa).

Residues 1-17 form the signal peptide; it reads MALPVWTLMLLVGAAWG. Residues 18–5310 are Extracellular-facing; the sequence is QEQVPAWRPN…TTRKKIEASS (5293 aa). MAM domains are found at residues 45–210, 215–374, and 377–542; these read SKCD…TCNQ, QMCT…PCGE, and PQCD…PCRV. N-linked (GlcNAc...) asparagine glycans are attached at residues Asn339 and Asn499. Positions 547 to 1170 are 80 X heptapeptide repeats (approximate) (mucin-like domain); that stretch reads EIPSSPLLPP…PTTGVSTTES (624 aa). Disordered regions lie at residues 553-579 and 1037-1113; these read LLPPTGPSESTVPTLPMEQPTSPTKAT and TVPP…TVST. The span at 1052–1113 shows a compositional bias: low complexity; the sequence is TEVTTTPPEE…IASEETTVST (62 aa). A TIL 1 domain is found at 1171 to 1220; sequence CPPNAHIELCACPASCESPKPSCQPPCIPGCVCNPGFLFSNNQCINESSC. N-linked (GlcNAc...) asparagine glycosylation is found at Asn1216, Asn1239, and Asn1314. One can recognise a VWFC 1 domain in the interval 1227–1275; it reads KHYKPGEEWFTPNCTERCRCLPGSLMECQISQCGTHTVCQLKSDQYQCE. The VWFD 1 domain occupies 1280–1462; the sequence is ATCLVYGDLH…DKDWVSSRCQ (183 aa). 2 cysteine pairs are disulfide-bonded: Cys1282/Cys1417 and Cys1304/Cys1461. One can recognise a TIL 2 domain in the interval 1555-1608; it reads CPKNSRYSLCAKPCPETCHPISTTQHCSDKCVEGCECDPGFILSGSECVPSSQC. A VWFC 2 domain is found at 1609–1664; that stretch reads GCTSFQGRYFKLQEQWFNPDCKEICTCESHNHILCKPWKCKAQEACSYKNGVLGCH. The VWFD 2 domain occupies 1669–1849; the sequence is ATCMVSGDPH…ILEASDPGCF (181 aa). 2 disulfide bridges follow: Cys1671/Cys1809 and Cys1693/Cys1848. 3 N-linked (GlcNAc...) asparagine glycosylation sites follow: Asn1814, Asn1908, and Asn1933. Residues 1941-1995 enclose the TIL 3 domain; sequence CPPRSSYNPCANSCPATCLTLSTPRDCPTLPCVEGCECQSGHILSGTTCVPLRQC. A VWFC 3 domain is found at 1996 to 2052; that stretch reads GCSDQDGSYHLLGESWYTEKTCTTLCTCSAHSNITCSPTACKANHVCLRQEGLLRCA. Asn2028, Asn2111, Asn2142, and Asn2332 each carry an N-linked (GlcNAc...) asparagine glycan. The VWFD 3 domain occupies 2056–2239; the sequence is GECRISEDSQ…KDKSMDPNCQ (184 aa). 2 disulfides stabilise this stretch: Cys2058/Cys2200 and Cys2080/Cys2238. The region spanning 2340-2398 is the TIL 4 domain; it reads CPAHSHYTNCLPSCPPSCLDPDSRCEGSGHKVPATCREGCICQPDYVLLNDKCVLRSHC. The region spanning 2399–2454 is the VWFC 4 domain; it reads GCKDAQGVFIPAGKTWISEDCTQSCTCMKGSMRCWDFQCPPGTYCKNSNDGSSNCV. Positions 2460-2518 constitute a TIL 5 domain; the sequence is CPAHSKFTDCLPPCHPSCSDPDGHCEGISTNAHSNCKEGCVCQPGYVLRNDKCVLRIEC. Positions 2519-2574 constitute a VWFC 5 domain; it reads GCQHTQGGFIPAGKNWTSRGCSQSCDCMEGVIRCQNFQCPSGTYCQDIEDGTSNCA. N-linked (GlcNAc...) asparagine glycosylation is found at Asn2533 and Asn2575. The region spanning 2580-2638 is the TIL 6 domain; it reads CPAHSSFTNCLPPCQPSCSDPEGHCGGSTTKAPSACQEGCVCEPDYVVLNNKCVPRIEC. Positions 2639–2694 constitute a VWFC 6 domain; the sequence is GCKDAQGVLIPADKIWINKGCTQTCACVTGTIHCRDFQCPSGTYCKDIKDDASNCT. Asn2692 is a glycosylation site (N-linked (GlcNAc...) asparagine). The TIL 7 domain maps to 2700–2758; that stretch reads CPDHSLYTHCLPSCLLSCSDPDGLCRGTSPEAPSTCKEGCVCDPDYVLSNDKCVLRIEC. One can recognise a VWFC 7 domain in the interval 2759-2814; that stretch reads GCKDAQGVLIPAGKTWINRGCTQSCSCMGGAIQCQNFKCPSEAYCQDMEDGNSNCT. The N-linked (GlcNAc...) asparagine glycan is linked to Asn2812. One can recognise a TIL 8 domain in the interval 2820–2878; sequence CPAHSHYTNCLPTCQPSCSDPDGHCEGSSTKAPSACKEGCVCEPDYVMLNNKCVPRIEC. Positions 2879–2934 constitute a VWFC 8 domain; the sequence is GCKDTQGVLIPADKTWINRGCTQSCTCRGGAIQCQKYHCSSGTYCKDMEDDSSSCA. The region spanning 2940–2998 is the TIL 9 domain; the sequence is CPAHSHFTNCLPPCQPSCLDSEGHCEGSTTKAPSACQEGCVCEPDYVVLNNKCVPRIEC. The region spanning 2999 to 3054 is the VWFC 9 domain; sequence GCKDAQGVLIPADKTWINRGCTQSCTCKGGAIQCQKFQCPSETYCKDIEDGNSNCT. Asn3052, Asn3065, Asn3144, and Asn3172 each carry an N-linked (GlcNAc...) asparagine glycan. Positions 3060–3118 constitute a TIL 10 domain; the sequence is CPANSNFTSCLPSCQPSCSNTDVHCEGSSPNTLSSCREGCVCQSGYVLHNDKCILRNQC. The 56-residue stretch at 3119 to 3174 folds into the VWFC 10 domain; that stretch reads GCKDAQGALIPEGKTWITSGCTQSCNCTGGAIQCQNFQCPLKTYCKDLKDGSSNCT. The region spanning 3180-3238 is the TIL 11 domain; sequence CPAHSRYTNCLPSCPPLCLDPEGLCEGTSPKVPSTCREGCICQPGYLMHKNKCVLRIFC. A VWFC 11 domain is found at 3239–3294; it reads GCKNTQGAFISADKTWISRGCTQSCTCPAGAIHCRNFKCPSGTYCKNGDNGSSNCT. N-linked (GlcNAc...) asparagine glycosylation is found at Asn3288 and Asn3292. Residues 3300–3355 enclose the TIL 12 domain; sequence CPTNSQFTDCLPSCVPSCSNRCEVTSPSVPSSCREGCLCNHGFVFSEDKCVPRTQC. The 56-residue stretch at 3356-3411 folds into the VWFC 12 domain; it reads GCKDARGAIIPAGKTWTSKGCTQSCACVEGNIQCQNFQCPPETYCKDNSEGSSTCT. One can recognise a TIL 13 domain in the interval 3417-3475; it reads CPAHTQYTSCLPSCLPSCLDPEGLCKDISPKVPSTCKEGCVCQSGYVLNSDKCVLRAEC. The region spanning 3476–3531 is the VWFC 13 domain; sequence DCKDAQGALIPAGKTWTSPGCTQSCACMGGAVQCQSSQCPPGTYCKDNEDGNSNCA. The region spanning 3537 to 3595 is the TIL 14 domain; it reads CPAHSLFTNCLPPCLPSCLDPDGLCKGASPKVPSTCKEGCICQSGYVLSNNKCLLRNRC. Residues 3596–3651 enclose the VWFC 14 domain; it reads GCKDAHGALIPEDKTWVSRGCTQSCVCTGGSIQCLSSQCPPGAYCKDNEDGSSNCA. One can recognise a TIL 15 domain in the interval 3657–3715; sequence CPANSHYTDCFPPCPPSCSDPEGHCEASGPRVLSTCREGCLCNPGFVLDRDKCVPRVEC. The region spanning 3716 to 3771 is the VWFC 15 domain; it reads GCKDAQGALIPSGKTWTSPGCTQSCACMGGVVQCQSSQCPPGTYCKDNEDGNSNCA. Residues 3777-3835 form the TIL 16 domain; it reads CPTHSNYTDCLPFCLPSCLDPSALCGGTSPKGPSTCKEGCVCQPGYVLDKDKCILKIEC. Asn3782 is a glycosylation site (N-linked (GlcNAc...) asparagine). The VWFC 16 domain maps to 3836-3891; it reads GCRDTQGAVIPAGKTWLSTGCIQSCACVEGTIQCQNFQCPPGTYCNHNNNCAKIPL. In terms of domain architecture, TIL 17 spans 3893–3951; the sequence is CPAHSHFTSCLPSCPPSCANLDGSCEQTSPKVPSTCKEGCLCQPGYFLNNGKCVLQTHC. Residues 3952-4007 form the VWFC 17 domain; the sequence is DCKDAEGGLVPAGKTWTSKDCTQSCACTGGAVQCQNFQCPLGTYCKDSGDGSSNCT. Asn4005 carries N-linked (GlcNAc...) asparagine glycosylation. One can recognise a TIL 18 domain in the interval 4029 to 4087; that stretch reads CPAHSHFTSCLPSCPPSCSNLDGSCVESNFKAPSVCKKGCICQPGYLLNNDKCVLRIQC. In terms of domain architecture, VWFC 18 spans 4088–4143; the sequence is GCKDTQGGLIPAGRTWISSDCTKSCSCMGGIIQCRDFQCPPGTYCKESNDSSRTCA. Asn4136 is a glycosylation site (N-linked (GlcNAc...) asparagine). The region spanning 4149-4207 is the TIL 19 domain; sequence CPAHSHYTNCLPACSRSCTDLDGHCEGTSPKVPSPCKEGCLCQPGYVVHNHKCVLQIHC. The VWFC 19 domain maps to 4208–4262; that stretch reads GCKDAQGGFVPAGKTWISRGCTQSCACVGGAVQCHNFTCPTGTQCQNSSCSKITV. 2 N-linked (GlcNAc...) asparagine glycosylation sites follow: Asn4243 and Asn4254. Residues 4264-4322 enclose the TIL 20 domain; the sequence is CPAHSQYTTCLPSCLPSCFDPEGLCGGASPRAPSTCREGCVCEADYVLREDKCVLRTQC. The region spanning 4323-4378 is the VWFC 20 domain; sequence GCKDAQGDLIPANKTWLTRGCAQKCTCKGGNIHCWNFKCPLGTECKDSVDGGSNCT. 2 N-linked (GlcNAc...) asparagine glycosylation sites follow: Asn4335 and Asn4376. In terms of domain architecture, TIL 21 spans 4384 to 4442; the sequence is CPAHSHHTYCLPSCIPSCSNVNDRCESTSLQRPSTCIEGCLCHSGFVFSKDKCVPRTQC. Positions 4443-4498 constitute a VWFC 21 domain; the sequence is GCKDSQGTLIPAGKNWITTGCSQRCTCTGGLVQCHDFQCPSGAECQDIEDGNSNCV. The region spanning 4504–4562 is the TIL 22 domain; the sequence is CPAHSHYSKCLPPCQPSCSDPDGHCEGTSPEAPSTCEEGCVCEPDYVLSNDKCVPSSEC. The region spanning 4563 to 4618 is the VWFC 22 domain; that stretch reads GCKDAHGVLIPESKTWVSRGCTKNCTCKGGTVQCHDFSCPTGSRCLDNNEGNSNCV. Asn4586 carries an N-linked (GlcNAc...) asparagine glycan. In terms of domain architecture, TIL 23 spans 4624–4682; the sequence is CPAHSLYTNCLPSCLPSCSDPEGLCGGTSPEVPSTCKEGCICQSGYVLHKNKCMLRIHC. A VWFC 23 domain is found at 4683 to 4738; the sequence is DCKDFQGSLIKTGQTWISSGCSKICTCKGGFFQCQSYKCPSGTQCEESEDGSSNCV. Positions 4744-4802 constitute a TIL 24 domain; it reads CPANSLYTHCLPTCLPSCSNPDGRCEGTSHKAPSTCREGCVCQPGYLLNKDTCVHKNQC. The region spanning 4803 to 4858 is the VWFC 24 domain; it reads GCKDIRGNIIPAGNTWISSDCTQSCACTDGVIQCQNFVCPSGSHCQYNEDGSSDCA. Positions 4863-5038 constitute a VWFD 4 domain; sequence ERCTIFGDPY…SWEVKAQHAF (176 aa). Cys4865 and Cys5001 form a disulfide bridge. Asn5136 carries N-linked (GlcNAc...) asparagine glycosylation. The region spanning 5150 to 5203 is the TIL 25 domain; that stretch reads CPANTVYQRCMTPCPASCAKFVTPKVCEGPCVEGCASLPGYIYSDTQSLPVTHC. The 55-residue stretch at 5204 to 5258 folds into the VWFC 25 domain; the sequence is GCTADGIYYKLGDSFVTNDCSQHCTCASQGILLCEPYGCRAGESCMVANFTRGCF. Asn5252 carries an N-linked (GlcNAc...) asparagine glycan. The 37-residue stretch at 5259 to 5295 folds into the EGF-like domain; the sequence is QDSPCLQNPCHNDGRCEEQGATFICHCDFGYGGEFCT. Cystine bridges form between Cys5263–Cys5274, Cys5268–Cys5283, and Cys5285–Cys5294. A helical transmembrane segment spans residues 5311-5337; it reads LVAILPGVLVMVLVPVLLPRVYVYMAT. Residues 5338–5376 lie on the Cytoplasmic side of the membrane; the sequence is RTTMGRRRMKRKEKKLLRQSRLRLEDADVPEPTFKATEF.

In terms of assembly, probably forms covalent oligomers. In testis, primarily in haploid spermatids.

It localises to the cell membrane. Binds in a species-specific manner to the zona pellucida of the egg. May be involved in gamete recognition and/or signaling. The protein is Zonadhesin (Zan) of Mus musculus (Mouse).